A 223-amino-acid polypeptide reads, in one-letter code: MTTNYAHYIDHTLLAMDATEAQIIKLCEEAKQHHFYAVCVNSGYVPVAAQQLAGSSVKVCSVIGFPLGAGLTAAKAFEAQAAINAGAQEIDMVINVGWLKSGKIADVKADIKAVRDNCAATPLKVILETCLLSDEQIVQVCKMCRELDVAFVKTSTGFSTGGAKEEHVKLMRATVGPVMGVKASGAVRDRATAETMIQAGATRIGTSSGVAIVSGQQAAASGY.

The active-site Proton donor/acceptor is the aspartate 91. Residue lysine 153 is the Schiff-base intermediate with acetaldehyde of the active site. Lysine 182 serves as the catalytic Proton donor/acceptor.

It belongs to the DeoC/FbaB aldolase family. DeoC type 1 subfamily.

It is found in the cytoplasm. It catalyses the reaction 2-deoxy-D-ribose 5-phosphate = D-glyceraldehyde 3-phosphate + acetaldehyde. It functions in the pathway carbohydrate degradation; 2-deoxy-D-ribose 1-phosphate degradation; D-glyceraldehyde 3-phosphate and acetaldehyde from 2-deoxy-alpha-D-ribose 1-phosphate: step 2/2. Catalyzes a reversible aldol reaction between acetaldehyde and D-glyceraldehyde 3-phosphate to generate 2-deoxy-D-ribose 5-phosphate. This Yersinia pseudotuberculosis serotype O:1b (strain IP 31758) protein is Deoxyribose-phosphate aldolase.